A 389-amino-acid polypeptide reads, in one-letter code: 5-hydroxytryptamine receptor 1B (389 aa).

Positions 1–27 are disordered; that stretch reads MEDAGTPCAPPPPAGSQTGAPPANLSS. The Extracellular segment spans residues 1 to 45; the sequence is MEDAGTPCAPPPPAGSQTGAPPANLSSAPHNCSAEGYIYQDSIAL. The segment covering 15 to 27 has biased composition (polar residues); that stretch reads GSQTGAPPANLSS. N-linked (GlcNAc...) asparagine glycosylation is found at N24 and N31. Residues 46–71 form a helical membrane-spanning segment; the sequence is PWKVLLAILLALLTLATTLSNAFVIA. Over 72–85 the chain is Cytoplasmic; sequence TVYRTRKLHTPANY. The helical transmembrane segment at 86 to 110 threads the bilayer; that stretch reads LIASLAVTDLLVSILVMPISTMYAV. Topologically, residues 111–118 are extracellular; that stretch reads TGRWTLGQ. Residues 119 to 144 form a helical membrane-spanning segment; the sequence is VVCDLWLSSDITCCTASILHLCVIAL. An intrachain disulfide couples C121 to C198. Ergotamine contacts are provided by D128 and T133. The DRY motif; important for ligand-induced conformation changes and signaling motif lies at 145-147; the sequence is DRY. The Cytoplasmic portion of the chain corresponds to 145 to 164; that stretch reads DRYWAITDAVEYSAKRTPKR. The helical transmembrane segment at 165–183 threads the bilayer; that stretch reads AAVMIALVWVFSISISLPP. Residues 184-204 are Extracellular-facing; that stretch reads FFWRQAKAEEEVSDCVVNTDH. Ergotamine is bound at residue V200. Residues 205–228 form a helical membrane-spanning segment; it reads ILYTVYSTVGAFYFPTLLLIALYG. Over 229 to 314 the chain is Cytoplasmic; sequence RIYVEARSRI…AARERKATKT (86 aa). Positions 258–271 are enriched in polar residues; the sequence is DSPGSTSSVTSVNS. The disordered stretch occupies residues 258 to 281; that stretch reads DSPGSTSSVTSVNSRAPDVPSESG. Residues 315–336 form a helical membrane-spanning segment; it reads LGIILGAFIVCWLPFFIISLVM. The Extracellular segment spans residues 337 to 346; it reads PICKDACWFH. A helical transmembrane segment spans residues 347–369; the sequence is LAIFDFFTWLGYLNSLINPIIYT. The short motif at 364–368 is the NPxxY motif; important for ligand-induced conformation changes and signaling element; it reads NPIIY. Over 370–389 the chain is Cytoplasmic; the sequence is MSNEDFKQAFHKLIRFKCAS. C387 carries the S-palmitoyl cysteine lipid modification.

It belongs to the G-protein coupled receptor 1 family. In terms of assembly, homodimer. Heterodimer with HTR1D. Phosphorylated. Desensitization of the receptor may be mediated by its phosphorylation. In terms of processing, palmitoylated.

It is found in the cell membrane. In terms of biological role, G-protein coupled receptor for 5-hydroxytryptamine (serotonin). Also functions as a receptor for ergot alkaloid derivatives, various anxiolytic and antidepressant drugs and other psychoactive substances, such as lysergic acid diethylamide (LSD). Ligand binding causes a conformation change that triggers signaling via guanine nucleotide-binding proteins (G proteins) and modulates the activity of downstream effectors, such as adenylate cyclase. HTR1B is coupled to G(i)/G(o) G alpha proteins and mediates inhibitory neurotransmission by inhibiting adenylate cyclase activity. Arrestin family members inhibit signaling via G proteins and mediate activation of alternative signaling pathways. Regulates the release of 5-hydroxytryptamine, dopamine and acetylcholine in the brain, and thereby affects neural activity, nociceptive processing, pain perception, mood and behavior. Besides, plays a role in vasoconstriction of cerebral arteries. The protein is 5-hydroxytryptamine receptor 1B (HTR1B) of Vulpes vulpes (Red fox).